The primary structure comprises 76 residues: Theta defensin subunit C (76 aa).

A signal peptide spans 1–22 (MRTFAFLTAMLLLVALHAQAEA). The propeptide occupies 23 to 64 (RQARADEAAIQEQPGADDQGMAHSFTRNESAVLPLSESERGL). Arg-65 participates in a covalent cross-link: Cyclopeptide (Arg-Cys) (interchain with C-73 in subunit A); in form BTD-4. Cys-68 and Cys-73 are oxidised to a cystine. A Cyclopeptide (Cys-Arg) (interchain with R-65 in subunit A); in form BTD-4 cross-link involves residue Cys-73. Residues 74 to 76 (RLL) constitute a propeptide that is removed on maturation.

The protein belongs to the alpha-defensin family. Theta subfamily. In terms of assembly, BTD-4 is a cyclic heterodimer composed of subunits A and C; disulfide-linked. Forms a cyclic peptide with subunit A (BTD-4). An additional intersubunit disulfide bond is formed.

BTD-4 has antimicrobial activity against the Gram-negative bacterium E.coli ML35, the Gram-positive bacterium S.aureus 502a, and the fungus C.albicans 16820. This Papio anubis (Olive baboon) protein is Theta defensin subunit C (BTDC).